The primary structure comprises 176 residues: 2-oxo-4-hydroxy-4-carboxy-5-ureidoimidazoline decarboxylase (176 aa).

H70 (proton donor; for OHCU decarboxylase activity) is an active-site residue. Residues P71, 83–87 (SQEEQ), and 118–122 (FIMAV) contribute to the substrate site. Residues 72-96 (DLGERTEMTDESQEEQASAGLDRLP) are disordered.

This sequence belongs to the OHCU decarboxylase family.

It carries out the reaction 5-hydroxy-2-oxo-4-ureido-2,5-dihydro-1H-imidazole-5-carboxylate + H(+) = (S)-allantoin + CO2. It functions in the pathway purine metabolism; urate degradation; (S)-allantoin from urate: step 3/3. Its function is as follows. Catalyzes the stereoselective decarboxylation of 2-oxo-4-hydroxy-4-carboxy-5-ureidoimidazoline (OHCU) to (S)-allantoin. This is 2-oxo-4-hydroxy-4-carboxy-5-ureidoimidazoline decarboxylase from Halalkalicoccus jeotgali (strain DSM 18796 / CECT 7217 / JCM 14584 / KCTC 4019 / B3).